The chain runs to 415 residues: Serine hydroxymethyltransferase (415 aa).

The segment covering 1-10 (MERSHIRDVD) has biased composition (basic and acidic residues). The disordered stretch occupies residues 1 to 21 (MERSHIRDVDPDAADALSSER). (6S)-5,6,7,8-tetrahydrofolate is bound by residues L119 and 123–125 (GHL). N6-(pyridoxal phosphate)lysine is present on K228. Residue 353 to 355 (SAF) coordinates (6S)-5,6,7,8-tetrahydrofolate.

This sequence belongs to the SHMT family. As to quaternary structure, homodimer. Pyridoxal 5'-phosphate is required as a cofactor.

The protein resides in the cytoplasm. The catalysed reaction is (6R)-5,10-methylene-5,6,7,8-tetrahydrofolate + glycine + H2O = (6S)-5,6,7,8-tetrahydrofolate + L-serine. The protein operates within one-carbon metabolism; tetrahydrofolate interconversion. Its pathway is amino-acid biosynthesis; glycine biosynthesis; glycine from L-serine: step 1/1. Its function is as follows. Catalyzes the reversible interconversion of serine and glycine with tetrahydrofolate (THF) serving as the one-carbon carrier. Also exhibits THF-independent aldolase activity toward beta-hydroxyamino acids, producing glycine and aldehydes, via a retro-aldol mechanism. This Haloquadratum walsbyi (strain DSM 16790 / HBSQ001) protein is Serine hydroxymethyltransferase.